We begin with the raw amino-acid sequence, 156 residues long: Ribonuclease H (156 aa).

In terms of domain architecture, RNase H type-1 spans 2–144 (TMKNVQAFTD…CDVLARTQAS (143 aa)). Residues Asp-11, Glu-49, Asp-71, and Asp-136 each contribute to the Mg(2+) site.

This sequence belongs to the RNase H family. Monomer. Mg(2+) is required as a cofactor.

It is found in the cytoplasm. It carries out the reaction Endonucleolytic cleavage to 5'-phosphomonoester.. Its function is as follows. Endonuclease that specifically degrades the RNA of RNA-DNA hybrids. The protein is Ribonuclease H of Nitratidesulfovibrio vulgaris (strain DSM 19637 / Miyazaki F) (Desulfovibrio vulgaris).